The sequence spans 760 residues: MAHPRKAVATPATLQLGPPAQTAQSPAATLRHSRTASSSRRLSLIRCFISCHTFNLFLLLLLLASGVRAASKLATRSNKTSGSSTASGVGAGTAATSAAAAAASGTPIWDHAIDLNDDFRILWQIINQDITFEIQARTLGYVGFGFSPDGNLAGADMAIGWVDKGQTYFQDRHVTRNGDPEPVVDPSQDYMLMLGYENATHTVLRFRRKLDTCDPSHDIAITNDTMRLLYMYHAQDPPHGSVRPGTLPDPARAFRPYRPMVLMQRAQLPMPSPTHDERVRVLELRNEDVELPAGDLPLFWCKMFKLEDINRKHHLIRYEPIYDSSSSVHYLQHITLHECQGAHAELEEMAREQGRPCLGARSIPLACNAIVASWSRGSEGFTYPHEAGYPIESRQAKYYLMETHYNNLKPDFAQLHARQMADNSGLKIYFTHVLRPNDAGTLSIGMDPNWRHIIPPGQKRVVSEGQCIEDCTGYAFPQQGINIFAVMMRTHQIGKEVKLRQIRQTEELPPIAHDSNIDVAYQDFRRLPQSVHSMPGDRLIAECIYDSSSRKAITLGGLTMKEESCTVLTLYYPRQKKLTTCHSLPSLPTVLHSLGIEQLATDSNPVLISSPPELAGMTLEARLISYDWENQFGEFQEATRKGSFKPICWGAKNHVVPGSEFLEGYSINVTKTYKKHRRCKPKRPLAPPTERTAPPPASDLSELPVLHELDNNNIIEGAARSSRSSATDVHSLSRGSGRHFISCLLWLGASSWWLLLMLRT.

The disordered stretch occupies residues 1 to 34 (MAHPRKAVATPATLQLGPPAQTAQSPAATLRHSR). Over residues 18–34 (PPAQTAQSPAATLRHSR) the composition is skewed to low complexity. The chain crosses the membrane as a helical span at residues 47-67 (CFISCHTFNLFLLLLLLASGV). N-linked (GlcNAc...) asparagine glycans are attached at residues N78, N198, and N223. The region spanning 117–233 (DDFRILWQII…DTMRLLYMYH (117 aa)) is the DOMON domain. Disulfide bonds link C339/C367, C467/C581, and C543/C565. N-linked (GlcNAc...) asparagine glycosylation occurs at N668. A disordered region spans residues 678–701 (RCKPKRPLAPPTERTAPPPASDLS). Residues 740 to 760 (FISCLLWLGASSWWLLLMLRT) traverse the membrane as a helical segment.

The protein belongs to the copper type II ascorbate-dependent monooxygenase family.

The protein resides in the membrane. The polypeptide is MOXD1 homolog 2 (olf413) (Drosophila melanogaster (Fruit fly)).